The primary structure comprises 554 residues: Solute carrier family 22 member 1 (554 aa).

Residues 1-24 (MPSVDDVLEQVGEFGWFQKQAFLN) are Cytoplasmic-facing. Residues 25–45 (LCLTSVAFAPIYVGIVFLGFT) form a helical membrane-spanning segment. Topologically, residues 46-234 (PDHRCRSPGV…EFVGLGYRKT (189 aa)) are extracellular. Asn71 is a glycosylation site (N-linked (GlcNAc...) asparagine). Residues 235–255 (VAILYQTAFSVGLVLLSGLAY) traverse the membrane as a helical segment. Over 256-261 (AVPHWR) the chain is Cytoplasmic. Residues 262–282 (SLQLAVSLPIFLLLLCYWFVP) traverse the membrane as a helical segment. Residues 282–286 (PESPR) carry the Proline-rich sequence motif. Residues 283–347 (ESPRWLLSQK…FRTQNLRKYT (65 aa)) lie on the Extracellular side of the membrane. Position 333 is a phosphoserine (Ser333). A helical membrane pass occupies residues 348-368 (FILMYLWFTSSVLYQGLIMHV). The Cytoplasmic portion of the chain corresponds to 369–376 (GATGGSLY). A helical membrane pass occupies residues 377–397 (LDFLYSALVEFPAAFVILLII). Over 398-402 (DRFGR) the chain is Extracellular. A helical transmembrane segment spans residues 403–423 (LYLLAGSNLLAGAACFFMIFI). Residues 424–431 (SHDLHWLS) are Cytoplasmic-facing. The chain crosses the membrane as a helical span at residues 432-452 (IVAACIGRMGITIVFQMVCLV). The Extracellular portion of the chain corresponds to 453-464 (SAELYPTFIRNL). A helical membrane pass occupies residues 465 to 485 (GVMVCSSLCDLGGVVAPFLVF). Residues 486–492 (RLTEVWR) are Cytoplasmic-facing. The chain crosses the membrane as a helical span at residues 493-513 (GLPLVLFAALGLVAGGMSLLL). Topologically, residues 514 to 554 (PETKGVALPETIEEVERLGRKAKPRDNMIYLQVKMPEPAGL) are extracellular.

Belongs to the major facilitator (TC 2.A.1) superfamily. Organic cation transporter (TC 2.A.1.19) family. In terms of processing, phosphorylated.

It localises to the basolateral cell membrane. The protein resides in the apical cell membrane. It is found in the lateral cell membrane. Its subcellular location is the basal cell membrane. The protein localises to the cell membrane. The catalysed reaction is 1-methylnicotinamide(out) = 1-methylnicotinamide(in). It carries out the reaction dopamine(out) = dopamine(in). It catalyses the reaction serotonin(out) = serotonin(in). The enzyme catalyses (R)-adrenaline(out) = (R)-adrenaline(in). The catalysed reaction is (R)-noradrenaline(out) = (R)-noradrenaline(in). It carries out the reaction histamine(out) = histamine(in). It catalyses the reaction guanidine(out) = guanidine(in). The enzyme catalyses choline(out) = choline(in). The catalysed reaction is acetylcholine(in) = acetylcholine(out). It carries out the reaction thiamine(in) = thiamine(out). It catalyses the reaction spermidine(in) = spermidine(out). The enzyme catalyses agmatine(out) = agmatine(in). The catalysed reaction is putrescine(out) = putrescine(in). It carries out the reaction (R)-carnitine(in) = (R)-carnitine(out). It catalyses the reaction O-isobutanoyl-(R)-carnitine(in) = O-isobutanoyl-(R)-carnitine(out). The enzyme catalyses O-acetyl-(R)-carnitine(in) = O-acetyl-(R)-carnitine(out). The catalysed reaction is O-3-hydroxybutanoyl-(R)-carnitine(in) = O-3-hydroxybutanoyl-(R)-carnitine(out). It carries out the reaction O-propanoyl-(R)-carnitine(in) = O-propanoyl-(R)-carnitine(out). It catalyses the reaction O-butanoyl-(R)-carnitine(in) = O-butanoyl-(R)-carnitine(out). The enzyme catalyses O-2-methylbutanoyl-(R)-carnitine(in) = O-2-methylbutanoyl-(R)-carnitine(out). The catalysed reaction is O-3-methylbutanoyl-(R)-carnitine(in) = O-3-methylbutanoyl-(R)-carnitine(out). It carries out the reaction O-hexanoyl-(R)-carnitine(in) = O-hexanoyl-(R)-carnitine(out). It catalyses the reaction L-histidyl-L-proline diketopiperazine(in) = L-histidyl-L-proline diketopiperazine(out). The enzyme catalyses (R)-salsolinol(in) = (R)-salsolinol(out). The catalysed reaction is prostaglandin F2alpha(out) = prostaglandin F2alpha(in). It carries out the reaction prostaglandin E2(out) = prostaglandin E2(in). With respect to regulation, phosphorylation of the transporter leads to changes in its substrate affinity, resulting in a regulation of the transport activity. In contrast with rat ortholog, ASP uptake is inhibited by protein kinase A (PKA) and C (PKC) activation. ASP uptake is also endogenously activated by calmodulin, the calmodulin-dependent kinase II and LCK tyrosine kinase. Inhibited by cGMP, most likely through a cGMP-binding protein that interacts with OCT1. Functionally, electrogenic voltage-dependent transporter that mediates the transport of a variety of organic cations such as endogenous bioactive amines, cationic drugs and xenobiotics. Functions as a pH- and Na(+)-independent, bidirectional transporter. Cation cellular uptake or release is driven by the electrochemical potential (i.e. membrane potential and concentration gradient) and substrate selectivity. Hydrophobicity is a major requirement for recognition in polyvalent substrates and inhibitors. Primarily expressed in the basolateral membrane of hepatocytes and proximal tubules and involved in the uptake and disposition of cationic compounds from the blood by hepatic and renal clearance. Most likely functions as an uptake carrier in enterocytes contributing to the intestinal elimination of organic cations from the systemic circulation. Transports endogenous monoamines such as N-1-methylnicotinamide (NMN), guanidine, neurotransmitters dopamine, serotonin, noradrenaline, adrenaline and histamine, and quaternary ammonium compound such as choline. Also transports natural polyamines such as spermidine, agmatine and putrescine at low affinity, but relatively high turnover. Involved in the hepatic and intestinal uptake of the vitamin B1/thiamine, hence regulating hepatic lipid and energy metabolism. Contributes to the influx and efflux of fatty acid carriers carnitines and acylcarnitines across the basolateral membrane of hepatocytes, from the liver to the systemic circulation and inversely and may be involved in regulating the systemic availability of hepatic acylcarnitines. Also capable of transporting non-amine endogenous compounds such as prostaglandin E2 (PGE2) and prostaglandin F2-alpha (PGF2-alpha). May contribute to the transport of cationic compounds in testes across the blood-testis-barrier. Also mediates the uptake of xenobiotics tributylmethylammonium (TBuMA), quinidine, N-methyl-quinine (NMQ), N-methyl-quinidine (NMQD) N-(4,4-azo-n-pentyl)-quinuclidine (APQ), azidoprocainamide methoiodide (AMP), N-(4,4-azo-n-pentyl)-21-deoxyajmalinium (APDA) and 4-(4-(dimethylamino)styryl)-N-methylpyridinium (ASP). The protein is Solute carrier family 22 member 1 (SLC22A1) of Sus scrofa (Pig).